The primary structure comprises 592 residues: Cyclin-dependent kinase-like 3 (592 aa).

Residues 4–286 (YETLGKVGEG…SSDLLHHEYF (283 aa)) enclose the Protein kinase domain. ATP is bound by residues 10–18 (VGEGSYGTV) and Lys-33. The short motif at 44–50 (NKIAMRE) is the [NKR]KIAxRE element. The Proton acceptor role is filled by Asp-125. Thr-158 is subject to Phosphothreonine. Tyr-160 bears the Phosphotyrosine mark. The segment covering 368 to 379 (GDISEPKKKEYE) has biased composition (basic and acidic residues). Disordered regions lie at residues 368–390 (GDIS…ANEN) and 459–485 (RAKK…PGPI). A compositionally biased stretch (polar residues) spans 466-477 (SSQSIGQVMPNS).

The protein belongs to the protein kinase superfamily. CMGC Ser/Thr protein kinase family. CDC2/CDKX subfamily.

It is found in the cytoplasm. It carries out the reaction L-seryl-[protein] + ATP = O-phospho-L-seryl-[protein] + ADP + H(+). The enzyme catalyses L-threonyl-[protein] + ATP = O-phospho-L-threonyl-[protein] + ADP + H(+). This is Cyclin-dependent kinase-like 3 from Homo sapiens (Human).